We begin with the raw amino-acid sequence, 566 residues long: Bicarbonate transporter BicA (566 aa).

Residues methionine 1 to aspartate 15 lie on the Cytoplasmic side of the membrane. The chain crosses the membrane as a helical span at residues isoleucine 16–alanine 36. Topologically, residues serine 37–glutamate 42 are periplasmic. Residues alanine 43 to threonine 63 traverse the membrane as a helical segment. Residue leucine 64 is a topological domain, cytoplasmic. Residues isoleucine 65–alanine 85 traverse the membrane as a helical segment. Threonine 69 is a binding site for hydrogencarbonate. The Periplasmic segment spans residues serine 86–glycine 93. A helical transmembrane segment spans residues leucine 94 to leucine 114. Residues lysine 115–threonine 126 lie on the Cytoplasmic side of the membrane. A helical membrane pass occupies residues valine 127 to phenylalanine 147. Residues leucine 148 to serine 169 are Periplasmic-facing. A helical transmembrane segment spans residues asparagine 170–proline 190. Over glutamate 191 to valine 196 the chain is Cytoplasmic. The helical transmembrane segment at isoleucine 197 to proline 217 threads the bilayer. The Periplasmic portion of the chain corresponds to glutamate 218 to arginine 247. Residues methionine 248–valine 268 traverse the membrane as a helical segment. The Na(+) site is built by aspartate 262, threonine 266, and glycine 304. Over valine 269–arginine 318 the chain is Cytoplasmic. Alanine 305 contributes to the hydrogencarbonate binding site. Threonine 306 lines the Na(+) pocket. Residues threonine 319–serine 339 form a helical membrane-spanning segment. A topological domain (periplasmic) is located at residue leucine 340. A helical membrane pass occupies residues threonine 341–isoleucine 361. Residues aspartate 362 to glutamate 371 lie on the Cytoplasmic side of the membrane. The helical transmembrane segment at isoleucine 372 to leucine 392 threads the bilayer. Residue isoleucine 393 is a topological domain, periplasmic. Residues valine 394 to leucine 414 traverse the membrane as a helical segment. At glutamine 415 to glycine 566 the chain is on the cytoplasmic side. Residues lysine 436–alanine 546 form the STAS domain.

The protein belongs to the SLC26A/SulP transporter (TC 2.A.53) family.

Its subcellular location is the cell inner membrane. Its function is as follows. Low/medium affinity, Na(+)-dependent bicarbonate transporter. The polypeptide is Bicarbonate transporter BicA (bicA) (Picosynechococcus sp. (strain ATCC 27264 / PCC 7002 / PR-6) (Agmenellum quadruplicatum)).